Consider the following 54-residue polypeptide: Lectin alpha-1 chain (54 aa).

This sequence belongs to the leguminous lectin family. Tetramer of two alpha and two beta chains.

This is Lectin alpha-1 chain from Lathyrus cicera (Flat-pod pea).